The chain runs to 439 residues: Protein ABHD8 (439 aa).

2 disordered regions span residues 54-75 (HAGP…PGVK) and 122-148 (ELAE…RPKR). Over residues 58–67 (APIPTPPPPP) the composition is skewed to pro residues. Positions 138-148 (GRRRRPRRPKR) are enriched in basic residues. Residues 169-271 (VLFFIHGVGG…HKVIMINGGG (103 aa)) form the AB hydrolase-1 domain. Catalysis depends on charge relay system residues S244, D362, and H390. The segment at 415–439 (EAEPKLEPKPKPQLLQPEPAPGEEK) is disordered.

Belongs to the AB hydrolase superfamily. As to quaternary structure, interacts with NLRP3 (via NACHT and LLR domains); this interaction is enhanced in the presence of NLRP3 inflammasome inducers, such as ATP, nigericin, silica, or alum. Interacts with ZDHHC12.

It is found in the cytoplasm. In terms of biological role, negatively regulates NLRP3-driven inflammation. Promotes NLRP3 degradation through the chaperone-mediated autophagy (CMA) pathway, hence attenuating inflammasome activation and IL1B secretion. Acts by recruiting palmitoyltransferase ZDHHC12 to NLRP3, facilitating NLRP3 palmitoylation and subsequent degradation. In Mus musculus (Mouse), this protein is Protein ABHD8.